A 432-amino-acid polypeptide reads, in one-letter code: Cyclic GMP-AMP synthase (432 aa).

Residue 110-115 coordinates GTP; that stretch reads QGSFQY. Residues aspartate 129 and aspartate 131 each contribute to the Mg(2+) site. Arginine 180 serves as a coordination point for ATP. Aspartate 191 is a Mg(2+) binding site. Position 255 (serine 255) interacts with ATP. Residues lysine 283, serine 297, and aspartate 344 each contribute to the GTP site. Residue glycine 432 forms a Glycyl cysteine dithioester (Gly-Cys) (interchain with C-13 in Cap2) linkage. Glycine 432 participates in a covalent cross-link: Glycyl cysteine dithioester (Gly-Cys) (interchain with C-493 in Cap2). Glycine 432 participates in a covalent cross-link: Glycyl cysteine dithioester (Gly-Cys) (interchain with C-513 in Cap2). Residue glycine 432 forms a Glycyl lysine isopeptide (Gly-Lys) (interchain with K-? in acceptor proteins) linkage.

Belongs to the CD-NTase family. A02 subfamily. As to quaternary structure, a Cap2 dimer is bound on either side by a DncV monomer. Requires Mg(2+) as cofactor. In terms of processing, in bacteria expressing capV-dncV-cap2-cap3, this protein is conjugated to about 130 cellular proteins by Cap2, most of which are involved in metabolism; more conjugated protein is found in the absence of Cap3. Most conjugation occurs via an isopeptide bond with the epsilon-amine of Lys on the target protein, but Cys-conjugation also occurs, including to Cap2. Conjugation or deconjugation from cellular proteins does not change the DncV activity in vitro, but does so in vivo during infection. (Microbial infection) During phage T4 infection is conjugated to at least 2 T4 proteins (fibritin (wac) and dexA.2).

The catalysed reaction is GTP + ATP = 3',3'-cGAMP + 2 diphosphate. Its activity is regulated as follows. Primed for activation by Cap2 which conjugates it to cellular proteins. cGAMP production is induced in phage T4 infected cells in a manner that requires Cap2 and Cap3, as well as a C-terminal Ala or Gly residue in this protein. Cyclic nucleotide synthase (second messenger synthase) of a CBASS antivirus system. CBASS (cyclic oligonucleotide-based antiphage signaling system) provides immunity against bacteriophages. The CD-NTase protein (DncV, this protein) synthesizes cyclic nucleotides in response to infection; these serve as specific second messenger signals. The signals activate a diverse range of effectors, leading to bacterial cell death and thus abortive phage infection. A type II-A(GA) CBASS system. Functionally, catalyzes the synthesis of 3',3'-cyclic GMP-AMP (cGAMP) from GTP and ATP, a second messenger in cell signal transduction. Its product controls the activity of cGAMP-activated phospholipase CapV, a patatin-like lipase that is a direct cGAMP receptor encoded in the dncV operon. In terms of biological role, protects E.coli against phage infection. When capV and dncV are introduced in E.coli MG1655 there is 1000-fold protection against phage P1; protection against other phage (T2, T4, T5, T6 and lambda-vir) requires the 2 subsequent genes (cap2 and cap3). In another paper the capV-dncV-cap2-cap3 operon gives 10(4)-10(5)-fold protection against phages lambda, T2, T4 and T6, about 1000-fold protection against P1 and 10-fold protection against T5. This chain is Cyclic GMP-AMP synthase, found in Escherichia coli (strain TW11681).